The primary structure comprises 207 residues: Thiamine-phosphate synthase (207 aa).

4-amino-2-methyl-5-(diphosphooxymethyl)pyrimidine-binding positions include 35–39 and Asn-67; that span reads QYRDK. The Mg(2+) site is built by Asp-68 and Asp-86. Thr-105 serves as a coordination point for 4-amino-2-methyl-5-(diphosphooxymethyl)pyrimidine. Residue 132 to 134 coordinates 2-[(2R,5Z)-2-carboxy-4-methylthiazol-5(2H)-ylidene]ethyl phosphate; that stretch reads SNT. Lys-135 is a 4-amino-2-methyl-5-(diphosphooxymethyl)pyrimidine binding site. Position 162 (Gly-162) interacts with 2-[(2R,5Z)-2-carboxy-4-methylthiazol-5(2H)-ylidene]ethyl phosphate.

Belongs to the thiamine-phosphate synthase family. It depends on Mg(2+) as a cofactor.

The catalysed reaction is 2-[(2R,5Z)-2-carboxy-4-methylthiazol-5(2H)-ylidene]ethyl phosphate + 4-amino-2-methyl-5-(diphosphooxymethyl)pyrimidine + 2 H(+) = thiamine phosphate + CO2 + diphosphate. It catalyses the reaction 2-(2-carboxy-4-methylthiazol-5-yl)ethyl phosphate + 4-amino-2-methyl-5-(diphosphooxymethyl)pyrimidine + 2 H(+) = thiamine phosphate + CO2 + diphosphate. It carries out the reaction 4-methyl-5-(2-phosphooxyethyl)-thiazole + 4-amino-2-methyl-5-(diphosphooxymethyl)pyrimidine + H(+) = thiamine phosphate + diphosphate. It functions in the pathway cofactor biosynthesis; thiamine diphosphate biosynthesis; thiamine phosphate from 4-amino-2-methyl-5-diphosphomethylpyrimidine and 4-methyl-5-(2-phosphoethyl)-thiazole: step 1/1. In terms of biological role, condenses 4-methyl-5-(beta-hydroxyethyl)thiazole monophosphate (THZ-P) and 2-methyl-4-amino-5-hydroxymethyl pyrimidine pyrophosphate (HMP-PP) to form thiamine monophosphate (TMP). The chain is Thiamine-phosphate synthase from Pseudomonas fluorescens (strain Pf0-1).